The following is a 39-amino-acid chain: Cytochrome b559 subunit beta (39 aa).

Residues 14–30 (WLAIHGLAVPTVFFLGS) traverse the membrane as a helical segment. His18 is a binding site for heme.

Belongs to the PsbE/PsbF family. In terms of assembly, heterodimer of an alpha subunit and a beta subunit. PSII is composed of 1 copy each of membrane proteins PsbA, PsbB, PsbC, PsbD, PsbE, PsbF, PsbH, PsbI, PsbJ, PsbK, PsbL, PsbM, PsbT, PsbX, PsbY, PsbZ, Psb30/Ycf12, at least 3 peripheral proteins of the oxygen-evolving complex and a large number of cofactors. It forms dimeric complexes. Heme b is required as a cofactor.

Its subcellular location is the plastid. The protein resides in the chloroplast thylakoid membrane. Its function is as follows. This b-type cytochrome is tightly associated with the reaction center of photosystem II (PSII). PSII is a light-driven water:plastoquinone oxidoreductase that uses light energy to abstract electrons from H(2)O, generating O(2) and a proton gradient subsequently used for ATP formation. It consists of a core antenna complex that captures photons, and an electron transfer chain that converts photonic excitation into a charge separation. In Staurastrum punctulatum (Green alga), this protein is Cytochrome b559 subunit beta.